The chain runs to 409 residues: MTKALEGIRVLDMTHVQSGPSATQLLAWLGADVVKLEAPTGDITRGQLRDLPDVDSLYFTMLNCNKRSITLNTKTERGKEILTELIRRSDVMVENFGPGAVDRMGFTWDRIRDINPRIVYASIKGFGDGPYTDFKAYEVVAQAMGGSMSTTGFEDGPPLATGAQIGDSGTGIHAVAGILAALYQRENTGRGQRVNVAMQHAVLNLCRVKLRDQQRLAHGPLAEYPNDDFGDEVPRSGNASGGGQPGWAVKCAPGGPNDYVYVIVQPVGWKPLSELIGRPELADDPEWATPEARLPQLTKMFQLIEEWSATLPKWEVLEKLNAHNIPCGPILSTKEIVEDASLVANEMVVTVPHPERGEFVTVGSPLKLSDSPVDVTSSPLLGEHNAEVYVGELGLGDEELRLLKSNGVI.

CoA-binding positions include 17–18, 71–74, 95–97, R103, and 135–138; these read QS, LNTK, NFG, and KAYE. D167 functions as the Nucleophile in the catalytic mechanism. The segment at 221–245 is disordered; sequence LAEYPNDDFGDEVPRSGNASGGGQP. 242–244 contributes to the substrate binding site; sequence GGQ.

Belongs to the CoA-transferase III family. Frc subfamily. As to quaternary structure, homodimer.

The catalysed reaction is formyl-CoA + oxalate = oxalyl-CoA + formate. It participates in metabolic intermediate degradation; oxalate degradation; CO(2) and formate from oxalate: step 1/2. In terms of biological role, involved in the catabolism of oxalate and in the adapatation to low pH via the induction of the oxalate-dependent acid tolerance response (ATR). Catalyzes the transfer of the CoA moiety from formyl-CoA to oxalate. The sequence is that of Formyl-CoA:oxalate CoA-transferase from Streptomyces avermitilis (strain ATCC 31267 / DSM 46492 / JCM 5070 / NBRC 14893 / NCIMB 12804 / NRRL 8165 / MA-4680).